We begin with the raw amino-acid sequence, 282 residues long: Shikimate dehydrogenase (NADP(+)) (282 aa).

Residues 15 to 17 (SKS) and T62 each bind shikimate. Catalysis depends on K66, which acts as the Proton acceptor. Shikimate is bound by residues N87 and D103. Residues 128 to 132 (GAGGA), 152 to 157 (NRTPAK), and M216 contribute to the NADP(+) site. Y218 is a binding site for shikimate. G240 contributes to the NADP(+) binding site.

This sequence belongs to the shikimate dehydrogenase family. As to quaternary structure, homodimer.

The catalysed reaction is shikimate + NADP(+) = 3-dehydroshikimate + NADPH + H(+). It functions in the pathway metabolic intermediate biosynthesis; chorismate biosynthesis; chorismate from D-erythrose 4-phosphate and phosphoenolpyruvate: step 4/7. Functionally, involved in the biosynthesis of the chorismate, which leads to the biosynthesis of aromatic amino acids. Catalyzes the reversible NADPH linked reduction of 3-dehydroshikimate (DHSA) to yield shikimate (SA). This chain is Shikimate dehydrogenase (NADP(+)), found in Nitrosococcus oceani (strain ATCC 19707 / BCRC 17464 / JCM 30415 / NCIMB 11848 / C-107).